Consider the following 152-residue polypeptide: Superoxide dismutase [Cu-Zn] (152 aa).

His-45, His-47, and His-62 together coordinate Cu cation. Cys-56 and Cys-145 form a disulfide bridge. Residues His-62, His-70, His-79, and Asp-82 each contribute to the Zn(2+) site. Cu cation is bound at residue His-119.

This sequence belongs to the Cu-Zn superoxide dismutase family. As to quaternary structure, homodimer. Cu cation is required as a cofactor. Requires Zn(2+) as cofactor.

Its subcellular location is the cytoplasm. It catalyses the reaction 2 superoxide + 2 H(+) = H2O2 + O2. Its function is as follows. Destroys radicals which are normally produced within the cells and which are toxic to biological systems. This Spinacia oleracea (Spinach) protein is Superoxide dismutase [Cu-Zn] (SODCC).